Here is a 244-residue protein sequence, read N- to C-terminus: MKNIKLVIEYDGTNYSGWQRQYNAITIQQRLEEAIEKATGEFSPVIGSSRTDAGVHARGFVCNFFTASKIPTSNIKMVLNTLLPEDIAVLDSKEVDSSFHSRYFTTGKEYSYTIVTGDRPPVIGRQYVYYFRRKLDIEKIKNSCEYFIGTHDFSAFKKKGSTARSSIRTIKELTVLKEKNIIKFNIVGDGFLYNMVRIIIGTLLEVGLGRFSIEYVKYILESKDRAKAGKPVPAKGLCLEKVFY.

Residue Asp52 is the Nucleophile of the active site. Tyr110 contacts substrate.

This sequence belongs to the tRNA pseudouridine synthase TruA family. Homodimer.

It catalyses the reaction uridine(38/39/40) in tRNA = pseudouridine(38/39/40) in tRNA. Formation of pseudouridine at positions 38, 39 and 40 in the anticodon stem and loop of transfer RNAs. This Clostridium kluyveri (strain ATCC 8527 / DSM 555 / NBRC 12016 / NCIMB 10680 / K1) protein is tRNA pseudouridine synthase A.